The primary structure comprises 485 residues: E3 ubiquitin-protein ligase TRIM58 (485 aa).

The segment at 15 to 59 adopts an RING-type zinc-finger fold; it reads CSVCLDFLQEPISVDCGHSFCLRCISEFCEKSDSAQGVYACPQCR. The B box-type zinc finger occupies 90 to 131; it reads AGSRQCARHGEDLSHFCEEDQTMLCWVCDTSPEHRSHRTETL. Zn(2+) contacts are provided by cysteine 95, histidine 98, cysteine 117, and histidine 123. Positions 192 to 241 form a coiled coil; sequence LAQEEQLQLRRLEEEERATLQRLRDSRNRLAQQNKALKELAEELEERSQR. A B30.2/SPRY domain is found at 271–466; it reads DLKTVCRIPG…LPPMTEAAPG (196 aa).

It belongs to the TRIM/RBCC family. Expressed in erythroblasts.

The catalysed reaction is S-ubiquitinyl-[E2 ubiquitin-conjugating enzyme]-L-cysteine + [acceptor protein]-L-lysine = [E2 ubiquitin-conjugating enzyme]-L-cysteine + N(6)-ubiquitinyl-[acceptor protein]-L-lysine.. The protein operates within protein modification; protein ubiquitination. Functionally, E3 ubiquitin ligase induced during late erythropoiesis. Directly binds and ubiquitinates the intermediate chain of the microtubule motor dynein (DYNC1LI1/DYNC1LI2), stimulating the degradation of the dynein holoprotein complex. May participate in the erythroblast enucleation process through regulation of nuclear polarization. The polypeptide is E3 ubiquitin-protein ligase TRIM58 (Trim58) (Mus musculus (Mouse)).